The following is a 242-amino-acid chain: Dehydration-responsive element-binding protein 1J (242 aa).

The span at 20 to 29 (SSATTAATAT) shows a compositional bias: low complexity. The segment at 20-44 (SSATTAATATGPASPKRPAGRTKFQ) is disordered. A DNA-binding region (AP2/ERF) is located at residues 50–109 (VFRGVRRRGRAGRWVCEVRVPGSRGDRLWVGTFDTAEEAARAHDAAMLALCGASASLNFA). The tract at residues 143 to 184 (FQRRGSTAATATATSGDAASTAPPSSSPVLSPNDDNASSAST) is disordered. Positions 148–184 (STAATATATSGDAASTAPPSSSPVLSPNDDNASSAST) are enriched in low complexity.

Belongs to the AP2/ERF transcription factor family. ERF subfamily.

Its subcellular location is the nucleus. Its function is as follows. Transcriptional activator that binds specifically to the DNA sequence 5'-[AG]CCGAC-3'. Binding to the C-repeat/DRE element mediates high salinity- and dehydration-inducible transcription. This Oryza sativa subsp. japonica (Rice) protein is Dehydration-responsive element-binding protein 1J (DREB1J).